The following is a 488-amino-acid chain: Inositol 1,3,4-trisphosphate 5/6-kinase 4 (488 aa).

2 residues coordinate 1D-myo-inositol 1,3,4-trisphosphate: lysine 208 and lysine 224. One can recognise an ATP-grasp domain in the interval 246–488 (NACAIVDPIR…RFDQHVQEKH (243 aa)). Residues arginine 263 and lysine 315 each coordinate ATP. 2 residues coordinate 1D-myo-inositol 1,3,4-trisphosphate: histidine 326 and lysine 360. Residues 349 to 360 (QEYVDHSSRIFK), serine 375, and serine 398 each bind ATP. The Mg(2+) site is built by aspartate 439, aspartate 453, and asparagine 455. 1D-myo-inositol 1,3,4-trisphosphate-binding residues include asparagine 455 and serine 459.

It belongs to the ITPK1 family. As to quaternary structure, monomer. Requires Mg(2+) as cofactor. In terms of tissue distribution, expressed in roots, leaf vasculature, cauline leaves, flower buds and siliques.

It catalyses the reaction 1D-myo-inositol 1,3,4-trisphosphate + ATP = 1D-myo-inositol 1,3,4,5-tetrakisphosphate + ADP + H(+). The enzyme catalyses 1D-myo-inositol 1,3,4-trisphosphate + ATP = 1D-myo-inositol 1,3,4,6-tetrakisphosphate + ADP + H(+). In terms of biological role, kinase that can phosphorylate the inositol polyphosphate Ins(1,3,4)P3 to form InsP4. Also phosphorylates a racemic mixture of Ins(1,4,6)P3 and Ins(3,4,6)P3 to form InsP4. Does not display inositol 3,4,5,6-tetrakisphosphate 1-kinase activity, but possesses inositol 1,4,5,6-tetrakisphosphate and inositol 1,3,4,5-tetrakisphosphate isomerase activity. Ins(1,3,4,6)P4 is an essential molecule in the hexakisphosphate (InsP6) pathway. This chain is Inositol 1,3,4-trisphosphate 5/6-kinase 4 (ITPK4), found in Arabidopsis thaliana (Mouse-ear cress).